Consider the following 341-residue polypeptide: GTPase Obg (341 aa).

Residues 1–159 (MKFLDQAKIY…RTIWLRLKLI (159 aa)) form the Obg domain. An OBG-type G domain is found at 160–327 (ADAGLVGLPN…TLRQLARIID (168 aa)). Residues 166–173 (GLPNAGKS), 191–195 (FTTLH), 212–215 (DIPG), 279–282 (SQVD), and 308–310 (SAV) contribute to the GTP site. Mg(2+)-binding residues include S173 and T193.

The protein belongs to the TRAFAC class OBG-HflX-like GTPase superfamily. OBG GTPase family. As to quaternary structure, monomer. Mg(2+) serves as cofactor.

It is found in the cytoplasm. Its function is as follows. An essential GTPase which binds GTP, GDP and possibly (p)ppGpp with moderate affinity, with high nucleotide exchange rates and a fairly low GTP hydrolysis rate. Plays a role in control of the cell cycle, stress response, ribosome biogenesis and in those bacteria that undergo differentiation, in morphogenesis control. The protein is GTPase Obg of Brucella abortus biovar 1 (strain 9-941).